The following is a 140-amino-acid chain: Gonadotropin subunit beta-2 (140 aa).

The first 23 residues, 1–23 (MSVPASSFLLLCFLMNSFSPAQS), serve as a signal peptide directing secretion. 6 disulfide bridges follow: Cys-29/Cys-77, Cys-43/Cys-92, Cys-46/Cys-130, Cys-54/Cys-108, Cys-58/Cys-110, and Cys-113/Cys-120. Asn-33 is a glycosylation site (N-linked (GlcNAc...) asparagine).

The protein belongs to the glycoprotein hormones subunit beta family. Heterodimer of an alpha and a beta chain.

The protein resides in the secreted. Its function is as follows. Involved in gametogenesis and steroidogenesis. The protein is Gonadotropin subunit beta-2 (cgbb) of Ictalurus punctatus (Channel catfish).